We begin with the raw amino-acid sequence, 115 residues long: Large ribosomal subunit protein uL24 (115 aa).

It belongs to the universal ribosomal protein uL24 family. Part of the 50S ribosomal subunit.

Its function is as follows. One of two assembly initiator proteins, it binds directly to the 5'-end of the 23S rRNA, where it nucleates assembly of the 50S subunit. In terms of biological role, one of the proteins that surrounds the polypeptide exit tunnel on the outside of the subunit. This is Large ribosomal subunit protein uL24 from Aster yellows witches'-broom phytoplasma (strain AYWB).